Here is a 92-residue protein sequence, read N- to C-terminus: Small ribosomal subunit protein uS19 (92 aa).

The protein belongs to the universal ribosomal protein uS19 family.

In terms of biological role, protein S19 forms a complex with S13 that binds strongly to the 16S ribosomal RNA. The polypeptide is Small ribosomal subunit protein uS19 (Bacillus pumilus (strain SAFR-032)).